Consider the following 234-residue polypeptide: Glycerol-3-phosphate acyltransferase (234 aa).

6 helical membrane passes run 4–24 (LLAI…LIAG), 56–76 (TVTL…VAFF), 90–110 (VALR…TVFA), 122–142 (AGML…VFLL), 152–172 (VASI…KYLF), and 191–211 (FHDS…IAII).

This sequence belongs to the PlsY family. As to quaternary structure, probably interacts with PlsX.

Its subcellular location is the cell inner membrane. It catalyses the reaction an acyl phosphate + sn-glycerol 3-phosphate = a 1-acyl-sn-glycero-3-phosphate + phosphate. The protein operates within lipid metabolism; phospholipid metabolism. Catalyzes the transfer of an acyl group from acyl-phosphate (acyl-PO(4)) to glycerol-3-phosphate (G3P) to form lysophosphatidic acid (LPA). This enzyme utilizes acyl-phosphate as fatty acyl donor, but not acyl-CoA or acyl-ACP. The polypeptide is Glycerol-3-phosphate acyltransferase (Chlorobium chlorochromatii (strain CaD3)).